The following is a 924-amino-acid chain: MAVKSLVFRRKFPLLVTGSLLALQPVAALTVQAADQFDCKVSATGGWDCSPLQNANANLPPRPAHTATSVSTAAAGSSVSGSGGETVEAEPTQRLVTESGGRALRSRSADYSHLDWIPREKLTAAQLAEIGPYCGGSYIEPVRPGMDDGAPSDESPTYVSAKASRYEQEKQIATLAGDVVLRQGSMQVEGDEANLHQLENRGELVGNVKLRDKGMLVVGDHAQVQLDNGEAQVDNAEYVIHKAHARGSALYAKRSENAIIMLKDGTYTRCEPSSNAWTLKGNNVKLNPATGFGTATNATLRVKDFPVFYTPYIYFPIDDRRQSGFLPPSFSSTSDTGFTLVTPYYFNLAPNYDATLYPRYMAKRGMMLEGEFRYLTHSSEGIVNAAYLNDKDDHREGFPDYSKDRWLYGLKNTTGLDSRWLAEVDYTRISDPYYFQDLDTDLGVGSTTYVNQRGTLTYRGDTFTGRLNAQAYQLATTTDVTPYDRLPQITFDGFLPYNPGGMQFTYGTEFVRFDRDLDENIYFNDDGSIRGKRPDASLQGLARATGDRMHLEPGMSLPMTRSWGYVTPTLKYLYTKYDLDLDSQGKTDLNKRDESFDSNQDRSLPLVKVDSGLYFDRDTTFAGTPFRQTLEPRAMYLYVPYKDQDSLPVFDTSEPSFSYDSLWRENRFTGKDRIGDANQLSLGVTSRFIEENGFERASISAGQIYYFRDRRVQLPGLTEKDLKRLNLDPSGLDNDSWRSPYAFAGQYRFNRDWRINSDFNWNPNTSRTESGSAIFHYQPEVDPGKVVNVGYRYRADARRFDSSRGTFRYGNEDDIIKQHDFSVIWPLVPQWSVLARWQYDYNKNRTLEAFGGFEYDSCCWKLRLINRYWLDVDDDAFLVQSEKADRGIFLQIVLKGLGGIVGNKTEMFLDKGIQGYRQREDQAM.

An N-terminal signal peptide occupies residues 1–33 (MAVKSLVFRRKFPLLVTGSLLALQPVAALTVQA). The disordered stretch occupies residues 58–102 (NLPPRPAHTATSVSTAAAGSSVSGSGGETVEAEPTQRLVTESGGR). A compositionally biased stretch (low complexity) spans 66 to 90 (TATSVSTAAAGSSVSGSGGETVEAE).

Belongs to the LptD family. As to quaternary structure, component of the lipopolysaccharide transport and assembly complex. Interacts with LptE and LptA.

The protein localises to the cell outer membrane. Functionally, together with LptE, is involved in the assembly of lipopolysaccharide (LPS) at the surface of the outer membrane. The chain is LPS-assembly protein LptD from Pseudomonas aeruginosa (strain UCBPP-PA14).